Consider the following 114-residue polypeptide: Small ribosomal subunit protein eS25 (114 aa).

The segment at 1 to 33 is disordered; that stretch reads MAPKKDKAPPPSSKPAKSGGKQKKKKWSKGKQK. Residues 20 to 30 are compositionally biased toward basic residues; that stretch reads GKQKKKKWSKG.

This sequence belongs to the eukaryotic ribosomal protein eS25 family.

The chain is Small ribosomal subunit protein eS25 (RPS25) from Amaranthus cruentus (Purple amaranth).